Here is a 568-residue protein sequence, read N- to C-terminus: Tetratricopeptide repeat protein 22 (568 aa).

7 TPR repeats span residues 66 to 99 (PAVRHLLGTFSFYLEELGDAREHFLEVARKDPGN), 101 to 133 (NAWANLAHVYGQLGQEEEEEASAGRLASLMGLE), 155 to 190 (YAHGFDVGCASPEERAQVLEAGIALYDKALGYGQQI), 203 to 237 (ATLFIRLDGIFLEMGSEEQKRLPAFNRTLALLGEV), 260 to 294 (KDTFSTTPMGVHEYGYSGTEPLDCFGKAIEIAKNQ), 296 to 328 (PILNRLAKIFHFLGKQDMAVGTCNMVLAVLTDP), and 432 to 465 (PELQLLRGKCLRVQGEDANAAACFKRAVELDDEG).

The protein is Tetratricopeptide repeat protein 22 (Ttc22) of Mus musculus (Mouse).